A 174-amino-acid polypeptide reads, in one-letter code: Stigma-specific STIG1-like protein 4 (174 aa).

The signal sequence occupies residues 1-25; the sequence is MMSIKLTLCALIFFLLNSLLHHVLG. Residues 140-174 form a disordered region; sequence PSSQPGKRHRRHKFHRPRPPPSPDSKLNYDDHDDE. Residues 145 to 157 are compositionally biased toward basic residues; sequence GKRHRRHKFHRPR.

Belongs to the STIG1 family.

The protein resides in the secreted. In terms of biological role, endosperm-specific cysteine-rich protein that acts downstream of BHLH95/ZOU to modify the interface between embryo and endosperm and mediate the separation of these two tissues during seed development. Necessary for the biogenesis of the embryo sheath, an extracuticular endosperm-derived structure at the surface of the embryo. Required for the separation of embryo and endosperm, and for normal progression of the embryo through the endosperm tissue. Required for the formation of a normal embryonic cuticle. In Arabidopsis thaliana (Mouse-ear cress), this protein is Stigma-specific STIG1-like protein 4.